The primary structure comprises 422 residues: 26S proteasome non-ATPase regulatory subunit 11 (422 aa).

Alanine 2 carries the post-translational modification N-acetylalanine. A phosphoserine mark is found at serine 14 and serine 23. One can recognise a PCI domain in the interval aspartate 224–proline 392. A Glycyl lysine isopeptide (Lys-Gly) (interchain with G-Cter in SUMO2) cross-link involves residue lysine 274.

This sequence belongs to the proteasome subunit S9 family. In terms of assembly, component of the 19S proteasome regulatory particle complex. The 26S proteasome consists of a 20S core particle (CP) and two 19S regulatory subunits (RP). The regulatory particle is made of a lid composed of 9 subunits including PSMD11, a base containing 6 ATPases and few additional components. In terms of processing, phosphorylated by AMPK.

It is found in the nucleus. The protein localises to the cytoplasm. The protein resides in the cytosol. Component of the 26S proteasome, a multiprotein complex involved in the ATP-dependent degradation of ubiquitinated proteins. This complex plays a key role in the maintenance of protein homeostasis by removing misfolded or damaged proteins, which could impair cellular functions, and by removing proteins whose functions are no longer required. Therefore, the proteasome participates in numerous cellular processes, including cell cycle progression, apoptosis, or DNA damage repair. In the complex, PSMD11 is required for proteasome assembly. Plays a key role in increased proteasome activity in embryonic stem cells (ESCs): its high expression in ESCs promotes enhanced assembly of the 26S proteasome, followed by higher proteasome activity. The sequence is that of 26S proteasome non-ATPase regulatory subunit 11 (PSMD11) from Bos taurus (Bovine).